We begin with the raw amino-acid sequence, 279 residues long: Thymidylate synthase (279 aa).

133-134 lines the dUMP pocket; the sequence is RR. Residue cysteine 154 is the Nucleophile of the active site. Residues 178-181, asparagine 189, and 219-221 contribute to the dUMP site; these read RSND and HIY. Aspartate 181 serves as a coordination point for (6R)-5,10-methylene-5,6,7,8-tetrahydrofolate. Residue alanine 278 coordinates (6R)-5,10-methylene-5,6,7,8-tetrahydrofolate.

This sequence belongs to the thymidylate synthase family. Bacterial-type ThyA subfamily. In terms of assembly, homodimer.

The protein resides in the cytoplasm. The enzyme catalyses dUMP + (6R)-5,10-methylene-5,6,7,8-tetrahydrofolate = 7,8-dihydrofolate + dTMP. The protein operates within pyrimidine metabolism; dTTP biosynthesis. Its function is as follows. Catalyzes the reductive methylation of 2'-deoxyuridine-5'-monophosphate (dUMP) to 2'-deoxythymidine-5'-monophosphate (dTMP) while utilizing 5,10-methylenetetrahydrofolate (mTHF) as the methyl donor and reductant in the reaction, yielding dihydrofolate (DHF) as a by-product. This enzymatic reaction provides an intracellular de novo source of dTMP, an essential precursor for DNA biosynthesis. This chain is Thymidylate synthase, found in Streptococcus pyogenes serotype M3 (strain SSI-1).